The sequence spans 492 residues: Steroid 21-hydroxylase (492 aa).

Arg-91 and Lys-120 together coordinate heme b. Position 231 (Arg-231) interacts with 17alpha-hydroxyprogesterone. A progesterone-binding site is contributed by Arg-231. The heme b site is built by His-363, Arg-424, and Cys-426.

Belongs to the cytochrome P450 family. The cofactor is heme b.

It localises to the endoplasmic reticulum membrane. It is found in the microsome membrane. It carries out the reaction 17alpha-hydroxyprogesterone + reduced [NADPH--hemoprotein reductase] + O2 = 11-deoxycortisol + oxidized [NADPH--hemoprotein reductase] + H2O + H(+). The enzyme catalyses progesterone + reduced [NADPH--hemoprotein reductase] + O2 = 21-hydroxyprogesterone + oxidized [NADPH--hemoprotein reductase] + H2O + H(+). In terms of biological role, specifically catalyzes the 21-hydroxylation of steroids. Required for the adrenal synthesis of mineralocorticoids and glucocorticoids. The protein is Steroid 21-hydroxylase (CYP21) of Lynx lynx (Eurasian lynx).